The chain runs to 138 residues: Large ribosomal subunit protein uL16 (138 aa).

A compositionally biased stretch (basic residues) spans 1-13 (MLQPKRRKYRKEQ). The disordered stretch occupies residues 1 to 20 (MLQPKRRKYRKEQKGRNTGI).

It belongs to the universal ribosomal protein uL16 family. Part of the 50S ribosomal subunit.

In terms of biological role, binds 23S rRNA and is also seen to make contacts with the A and possibly P site tRNAs. The protein is Large ribosomal subunit protein uL16 of Burkholderia mallei (strain NCTC 10247).